Reading from the N-terminus, the 187-residue chain is Flavin-dependent monooxygenase, reductase subunit HsaB (187 aa).

Residues 32–36 (PVGFA), 38–39 (QS), 53–55 (CPT), 59–60 (RS), and 85–86 (RF) contribute to the FAD site. 152 to 155 (FYRG) is a binding site for NAD(+).

This sequence belongs to the non-flavoprotein flavin reductase family. As to quaternary structure, hsaAB monooxygenase consists of an oxygenase component HsaA and a reductase component HsaB.

The enzyme catalyses a reduced flavin + NAD(+) = an oxidized flavin + NADH + 2 H(+). Its pathway is lipid metabolism; steroid biosynthesis. In terms of biological role, catalyzes the reduction of free flavins (FMN or FAD) by NADH. Subsequently, the reduced flavins diffuse to the HsaA oxygenase subunit. This chain is Flavin-dependent monooxygenase, reductase subunit HsaB (hsaB), found in Mycobacterium tuberculosis (strain CDC 1551 / Oshkosh).